The sequence spans 377 residues: tRNA N6-adenosine threonylcarbamoyltransferase (377 aa).

Positions 129 and 133 each coordinate Fe cation. Substrate-binding positions include 151-155 (LVSGG), Asp184, Gly197, and Asn298. Fe cation is bound at residue Asp326. The segment at 358–377 (DGAAAKSDPAIGSGRKGPKA) is disordered.

It belongs to the KAE1 / TsaD family. It depends on Fe(2+) as a cofactor.

The protein localises to the cytoplasm. The enzyme catalyses L-threonylcarbamoyladenylate + adenosine(37) in tRNA = N(6)-L-threonylcarbamoyladenosine(37) in tRNA + AMP + H(+). Its function is as follows. Required for the formation of a threonylcarbamoyl group on adenosine at position 37 (t(6)A37) in tRNAs that read codons beginning with adenine. Is involved in the transfer of the threonylcarbamoyl moiety of threonylcarbamoyl-AMP (TC-AMP) to the N6 group of A37, together with TsaE and TsaB. TsaD likely plays a direct catalytic role in this reaction. This chain is tRNA N6-adenosine threonylcarbamoyltransferase, found in Maricaulis maris (strain MCS10) (Caulobacter maris).